We begin with the raw amino-acid sequence, 381 residues long: Ubiquitin-associated protein 1-like (381 aa).

The region spanning 4-50 (LDGVPFKLPKGFVIGTEPLPGPELSVPACGEVLLGSMHDFSLERTAL) is the UMA domain. Disordered stretches follow at residues 87–141 (LAPA…PGRR) and 185–228 (SLCP…LRSH). The span at 95 to 104 (RDPEAGHQER) shows a compositional bias: basic and acidic residues. The segment covering 105-123 (PEEEGEDEAEASSGSEEEP) has biased composition (acidic residues). Positions 124–141 (APSSLQPGSPASPGPGRR) are enriched in low complexity. A compositionally biased stretch (pro residues) spans 197–216 (ASPPGPAPQHPAAPASPPRP).

The chain is Ubiquitin-associated protein 1-like (UBAP1L) from Homo sapiens (Human).